Here is a 194-residue protein sequence, read N- to C-terminus: Calcium channel flower (194 aa).

3 helical membrane-spanning segments follow: residues 34–54 (LLGI…VFSI), 59–79 (VSCL…MLLE), and 107–127 (GLYI…ASLF).

The protein belongs to the calcium channel flower family. In terms of assembly, homomultimer. Associates with the dally/ magu complex.

Its subcellular location is the cell membrane. It localises to the cytoplasmic vesicle. The protein resides in the secretory vesicle. The protein localises to the synaptic vesicle membrane. It is found in the presynaptic cell membrane. Its subcellular location is the endosome. Its activity is regulated as follows. Channel activity is inhibited by La(3+), which reduces Ca(2+) influx and thus inhibits it's function in promoting activity-dependent bulk endocytosis (ADBE) in response to high stimuli. Its function is as follows. Transmembrane protein which mediates synaptic endocytosis, fitness-based cell culling, neuronal culling, morphogen gradient scaling, and calcium transport. Regulates synaptic endocytosis and hence couples exo- with endocytosis. Controls two major modes of synaptic vesicle (SV) endocytosis in the synaptic boutons of neuromuscular junctions (NMJs); Ca(2+) channel-independent Clathrin-mediated endocytosis (CME) in response to mild stimulation, and Ca(2+) channel-dependent activity-dependent bulk endocytosis (ADBE) in response to strong stimulation. Functions in ADBE and subsequent SV reformation from bulk endosomes by initiating Ca(2+) channel-dependent phosphatidylinositol 4,5-bisphosphate (PtdIns(4,5)P2) compartmentalization in synaptic boutons. There it acts at the periactive zone to provide the low Ca(2+) levels required to initiate Calcineurin activation and upregulate PtdIns(4,5)P2. Conversely PtdIns(4,5)P2 enhances fwe Ca(2+) channel-activity, establishing a positive feedback loop that induces PtdIns(4,5)P2 microdomain at the periactive zone. These microdomains trigger bulk membrane invagination (i.e. ADBE) by triggering actin polymerization while also promoting localization of fwe to bulk endosomes, thereby removing the ADBE trigger to reduce endocytosis and prevent excess membrane uptake. PtdIns(4,5)P2 then promotes SV reformation from the bulk endosomes, to coordinate ADBE and subsequent SV reformation. Different combinations of the flower isoforms at the cell membrane are also required for the identification and elimination of suboptimal or supernumerary cells during development, regeneration, and adulthood. Required for the recognition and elimination of unfit cells in the developing wing during cell competition. In the developing pupal retina, mediates the elimination of unwanted postmitotic neurons, including supernumerary photoreceptor neurons that form at the periphery of the retina and are contained within incomplete ommatidia units. Also required for efficient elimination and replacement of old neurons by newly generated neurons during regeneration in the adult brain following mechanical injury. Downstream of the flower fitness fingerprints, cells identified as unwanted or unfit are eliminated via apoptosis through the expression of ahuizotl (azot). However, the cells marked for elimination by the flower isoforms only undergo apoptosis if additional thresholds are met; (1) their neighboring fit/healthy cells express different levels of the fwe isoforms, and (2) the levels of the protective signal SPARC expressed by the loser or unwanted cells are unable to inhibit caspase activation. These additional thresholds for flower-mediated apoptosis, allows useful cells to recover from transient and limited stress before they are unnecessarily eliminated. Functions with dally and magu in a mechanism of scaling, which utilises apoptosis to ensure that the dpp morphogen gradient, which mediates organ growth, remains proportional to the size of the growing wing. In this mechanism, fwe represses dally- and Magu-dependent activity in expanding the gradient, and dally/Magu inhibits fwe-dependent apoptosis to keep cell death rate low. When the levels of these different proteins are optimally regulated the gradient correctly scales with organ growth but when this fails, fwe-mediated apoptosis is activated to trim the developing tissue to match the correct size of the gradient. The polypeptide is Calcium channel flower (Drosophila erecta (Fruit fly)).